The chain runs to 338 residues: Methionine import ATP-binding protein MetN 1 (338 aa).

One can recognise an ABC transporter domain in the interval 2–241 (IELHQVSKSF…AKHATTKRFV (240 aa)). ATP is bound at residue 38-45 (GYSGAGKS).

This sequence belongs to the ABC transporter superfamily. Methionine importer (TC 3.A.1.24) family. In terms of assembly, the complex is composed of two ATP-binding proteins (MetN), two transmembrane proteins (MetI) and a solute-binding protein (MetQ).

The protein resides in the cell membrane. It carries out the reaction L-methionine(out) + ATP + H2O = L-methionine(in) + ADP + phosphate + H(+). It catalyses the reaction D-methionine(out) + ATP + H2O = D-methionine(in) + ADP + phosphate + H(+). Functionally, part of the ABC transporter complex MetNIQ involved in methionine import. Responsible for energy coupling to the transport system. The polypeptide is Methionine import ATP-binding protein MetN 1 (Listeria innocua serovar 6a (strain ATCC BAA-680 / CLIP 11262)).